Consider the following 477-residue polypeptide: Glycogen synthase (477 aa).

Lys-15 contacts ADP-alpha-D-glucose.

This sequence belongs to the glycosyltransferase 1 family. Bacterial/plant glycogen synthase subfamily.

It carries out the reaction [(1-&gt;4)-alpha-D-glucosyl](n) + ADP-alpha-D-glucose = [(1-&gt;4)-alpha-D-glucosyl](n+1) + ADP + H(+). It functions in the pathway glycan biosynthesis; glycogen biosynthesis. In terms of biological role, synthesizes alpha-1,4-glucan chains using ADP-glucose. This Serratia proteamaculans (strain 568) protein is Glycogen synthase.